The chain runs to 749 residues: 5-methyltetrahydropteroyltriglutamate--homocysteine methyltransferase (749 aa).

Residues 15–18 and Lys-114 contribute to the 5-methyltetrahydropteroyltri-L-glutamate site; that span reads RELK. Residues 425 to 427 and Glu-478 contribute to the L-homocysteine site; that span reads IGS. L-methionine is bound by residues 425–427 and Glu-478; that span reads IGS. Residue Trp-555 coordinates 5-methyltetrahydropteroyltri-L-glutamate. Asp-593 is an L-homocysteine binding site. Asp-593 is an L-methionine binding site. Position 599 (Glu-599) interacts with 5-methyltetrahydropteroyltri-L-glutamate. Zn(2+) is bound by residues His-636, Cys-638, and Glu-660. The active-site Proton donor is the His-689. Cys-721 provides a ligand contact to Zn(2+).

Belongs to the vitamin-B12 independent methionine synthase family. It depends on Zn(2+) as a cofactor.

It carries out the reaction 5-methyltetrahydropteroyltri-L-glutamate + L-homocysteine = tetrahydropteroyltri-L-glutamate + L-methionine. It functions in the pathway amino-acid biosynthesis; L-methionine biosynthesis via de novo pathway; L-methionine from L-homocysteine (MetE route): step 1/1. Functionally, catalyzes the transfer of a methyl group from 5-methyltetrahydrofolate to homocysteine resulting in methionine formation. The protein is 5-methyltetrahydropteroyltriglutamate--homocysteine methyltransferase of Streptococcus pneumoniae serotype 19F (strain G54).